Reading from the N-terminus, the 305-residue chain is Peroxisome biogenesis factor 2 (305 aa).

Residues 1 to 15 (MASRKENAKSANRVL) lie on the Peroxisomal matrix side of the membrane. A helical transmembrane segment spans residues 16–42 (RISQLDALELNKALEQLVWSQFTQCFH). Residues 43-48 (GFKPGL) lie on the Cytoplasmic side of the membrane. A helical transmembrane segment spans residues 49–74 (LARFEPEVKACLWVFLWRFTIYSKNA). The Peroxisomal matrix portion of the chain corresponds to 75–98 (TVGQSVLNIKYKNDFSPNLRYQPP). Residue K84 is modified to N6-acetyllysine. Residues 99–125 (SKNQKIWYAVCTIGGRWLEERCYDLFR) traverse the membrane as a helical segment. At 126 to 133 (NHHLASFG) the chain is on the cytoplasmic side. A helical membrane pass occupies residues 134–160 (KVKQCVNFVIGLLKLGGLINFLIFLQR). Over 161 to 187 (GKFATLTERLLGIHSVFCKPQNICEVG) the chain is Peroxisomal matrix. A helical membrane pass occupies residues 188–211 (FEYMNRELLWHGFAEFLIFLLPLI). At 212 to 305 (NVQKLKAKLS…GIEMSEVNAL (94 aa)) the chain is on the cytoplasmic side. 8 residues coordinate Zn(2+): C244, C247, C259, H261, C264, C267, C280, and C283. The segment at 244-284 (CALCGEWPTMPHTIGCEHIFCYFCAKSSFLFDVYFTCPKCG) adopts an RING-type zinc-finger fold.

Belongs to the pex2/pex10/pex12 family. As to quaternary structure, component of the PEX2-PEX10-PEX12 retrotranslocation channel, composed of PEX2, PEX10 and PEX12. Forms intramolecular and intermolecular disulfide bonds in response to reactive oxygen species (ROS), promoting higher stability.

It is found in the peroxisome membrane. The enzyme catalyses [E2 ubiquitin-conjugating enzyme]-S-ubiquitinyl-L-cysteine + [acceptor protein]-L-cysteine = [E2 ubiquitin-conjugating enzyme]-L-cysteine + [acceptor protein]-S-ubiquitinyl-L-cysteine.. It carries out the reaction S-ubiquitinyl-[E2 ubiquitin-conjugating enzyme]-L-cysteine + [acceptor protein]-L-lysine = [E2 ubiquitin-conjugating enzyme]-L-cysteine + N(6)-ubiquitinyl-[acceptor protein]-L-lysine.. It participates in protein modification; protein ubiquitination. Functionally, E3 ubiquitin-protein ligase component of a retrotranslocation channel required for peroxisome organization by mediating export of the PEX5 receptor from peroxisomes to the cytosol, thereby promoting PEX5 recycling. The retrotranslocation channel is composed of PEX2, PEX10 and PEX12; each subunit contributing transmembrane segments that coassemble into an open channel that specifically allows the passage of PEX5 through the peroxisomal membrane. PEX2 also regulates peroxisome organization by acting as a E3 ubiquitin-protein ligase. PEX2 ubiquitinates PEX5 during its passage through the retrotranslocation channel: catalyzes monoubiquitination of PEX5 at 'Cys-11', a modification that acts as a signal for PEX5 extraction into the cytosol. Required for pexophagy in response to starvation by mediating ubiquitination of peroxisomal proteins, such as PEX5 and ABCD3/PMP70. Also involved in the response to reactive oxygen species (ROS) by mediating 'Lys-48'-linked polyubiquitination and subsequent degradation of PNPLA2/ATGL, thereby regulating lipolysis. This Homo sapiens (Human) protein is Peroxisome biogenesis factor 2.